A 537-amino-acid chain; its full sequence is Oocyte zinc finger protein XlCOF29 (537 aa).

Residues 1–21 form a disordered region; that stretch reads MGMSEKASDTGMKGKKKDKNE. C2H2-type zinc fingers lie at residues 375 to 397, 403 to 425, 431 to 453, 459 to 481, 487 to 509, and 515 to 537; these read FTCSECGKTYTRLYNLKIHLKSH, FSCSECEECFTDHTDLVIHRRLH, FPCAECGKCFTNCTNLRAHSKTH, YSCTECGKTFRDRSHLNIHKKRH, YTCSECGKCFAYRSNLMVHVRIH, and FSCSKCGKCFTDHANLIVHERMH.

This sequence belongs to the krueppel C2H2-type zinc-finger protein family.

It is found in the nucleus. In terms of biological role, may be involved in transcriptional regulation. This Xenopus laevis (African clawed frog) protein is Oocyte zinc finger protein XlCOF29.